Reading from the N-terminus, the 856-residue chain is Leucine--tRNA ligase (856 aa).

A 'HIGH' region motif is present at residues 53–63 (PYPSGNLHMGH). Positions 622-626 (KMSKS) match the 'KMSKS' region motif. Lys-625 contacts ATP.

Belongs to the class-I aminoacyl-tRNA synthetase family.

Its subcellular location is the cytoplasm. The catalysed reaction is tRNA(Leu) + L-leucine + ATP = L-leucyl-tRNA(Leu) + AMP + diphosphate. The polypeptide is Leucine--tRNA ligase (Prochlorococcus marinus (strain MIT 9301)).